Here is a 545-residue protein sequence, read N- to C-terminus: Serine/threonine-protein kinase PAK 1 (545 aa).

The disordered stretch occupies residues 1-75 (MSNNGVDIQD…KKREKERPEI (75 aa)). S2 carries the N-acetylserine modification. A Phosphoserine; by PKB and autocatalysis modification is found at S21. At S57 the chain carries Phosphoserine; by autocatalysis. Residues 70-140 (KERPEISLPS…YNSKKTSNSK (71 aa)) form an autoregulatory region region. The CRIB domain occupies 75–88 (ISLPSDFEHTIHVG). The tract at residues 75–105 (ISLPSDFEHTIHVGFDAVTGEFTGMPEQWAR) is GTPase-binding. At T84 the chain carries Phosphothreonine; by OXSR1. S115 bears the Phosphoserine mark. 2 positions are modified to phosphotyrosine: Y131 and Y142. S144 and S149 each carry phosphoserine; by autocatalysis. A disordered region spans residues 150-198 (AEDYNSSNTLNVKTVSETPAVPPVSEDDEDDDDDATPPPVIAPRPEHTK). A compositionally biased stretch (polar residues) spans 152–166 (DYNSSNTLNVKTVSE). A Phosphotyrosine; by JAK2 modification is found at Y153. The residue at position 174 (S174) is a Phosphoserine. Residues 174–184 (SEDDEDDDDDA) show a composition bias toward acidic residues. Residue T185 is modified to Phosphothreonine. S199 bears the Phosphoserine; by autocatalysis mark. Position 201 is a phosphotyrosine; by JAK2 (Y201). S204 carries the phosphoserine; by autocatalysis modification. Positions 210–250 (PVTPTRDVATSPISPTENNTTPPDALTRNTEKQKKKPKMSD) are disordered. 2 positions are modified to phosphothreonine: T212 and T219. Phosphoserine is present on residues S220 and S223. The span at 220–231 (SPISPTENNTTP) shows a compositional bias: polar residues. Residues T225, T229, and T230 each carry the phosphothreonine modification. The region spanning 270–521 (YTPFEKIGQG…AKELLQHQFL (252 aa)) is the Protein kinase domain. Residue 276-284 (IGQGASGTV) participates in ATP binding. Y285 bears the Phosphotyrosine; by JAK2 mark. ATP is bound at residue K299. D389 functions as the Proton acceptor in the catalytic mechanism. Position 423 is a phosphothreonine; by autocatalysis, BRSK2 and PDPK1 (T423).

The protein belongs to the protein kinase superfamily. STE Ser/Thr protein kinase family. STE20 subfamily. Homodimer in its autoinhibited state. Active as monomer. Interacts with GIT1. Component of cytoplasmic complexes, which also contains PXN, ARHGEF7 and GIT1. Interacts with NISCH. Interacts with DVL1; mediates the formation of a DVL1, MUSK and PAK1 ternary complex involved in AChR clustering. Binds to the caspase-cleaved p110 isoform of CDC2L1 and CDC2L2, p110C, but not the full-length proteins. Interacts with ARHGEF7. Interacts tightly with GTP-bound but not GDP-bound CDC42/P21 and RAC1. Interacts with SCRIB. Interacts with PDPK1. Interacts (via kinase domain) with RAF1. Interacts with NCK1 and NCK2. Interacts with TBCB. Interacts with BRSK2. Interacts with SNAI1. Interacts with CIB1 (via N-terminal region); the interaction is direct, promotes PAK1 activity and occurs in a calcium-dependent manner. Interacts with INPP5K. Interacts with gamma-tubulin. Interacts with RHOU; the interaction promotes PAK1 activation. Mg(2+) serves as cofactor. Post-translationally, autophosphorylated in trans, meaning that in a dimer, one kinase molecule phosphorylates the other one. Activated by autophosphorylation at Thr-423 in response to a conformation change, triggered by interaction with GTP-bound CDC42 or RAC1. Activated by phosphorylation at Thr-423 by BRSK2 and by PDPK1. Phosphorylated by JAK2 in response to PRL; this increases PAK1 kinase activity. Phosphorylated at Ser-21 by PKB/AKT; this reduces interaction with NCK1 and association with focal adhesion sites. Upon DNA damage, phosphorylated at Thr-212 and translocates to the nucleoplasm. Phosphorylated at tyrosine residues, which can be enhanced by NTN1.

Its subcellular location is the cytoplasm. The protein resides in the cell junction. The protein localises to the focal adhesion. It is found in the cell projection. It localises to the lamellipodium. Its subcellular location is the cell membrane. The protein resides in the ruffle membrane. The protein localises to the invadopodium. It is found in the nucleus. It localises to the nucleoplasm. Its subcellular location is the chromosome. The protein resides in the cytoskeleton. The protein localises to the microtubule organizing center. It is found in the centrosome. The catalysed reaction is L-seryl-[protein] + ATP = O-phospho-L-seryl-[protein] + ADP + H(+). The enzyme catalyses L-threonyl-[protein] + ATP = O-phospho-L-threonyl-[protein] + ADP + H(+). Its activity is regulated as follows. Phosphorylation of Thr-84 by OXSR1 inhibits activation. Activated by binding small G proteins. Binding of GTP-bound CDC42 or RAC1 to the autoregulatory region releases monomers from the autoinhibited dimer, and enables activation by phosphorylation of Thr-423. Protein kinase involved in intracellular signaling pathways downstream of integrins and receptor-type kinases that plays an important role in cytoskeleton dynamics, in cell adhesion, migration, proliferation, apoptosis, mitosis, and in vesicle-mediated transport processes. Can directly phosphorylate BAD and protects cells against apoptosis. Activated by interaction with CDC42 and RAC1. Functions as a GTPase effector that links the Rho-related GTPases CDC42 and RAC1 to the JNK MAP kinase pathway. Phosphorylates and activates MAP2K1, and thereby mediates activation of downstream MAP kinases. Involved in the reorganization of the actin cytoskeleton, actin stress fibers and of focal adhesion complexes. Phosphorylates the tubulin chaperone TBCB and thereby plays a role in the regulation of microtubule biogenesis and organization of the tubulin cytoskeleton. Plays a role in the regulation of insulin secretion in response to elevated glucose levels. Part of a ternary complex that contains PAK1, DVL1 and MUSK that is important for MUSK-dependent regulation of AChR clustering during the formation of the neuromuscular junction (NMJ). Activity is inhibited in cells undergoing apoptosis, potentially due to binding of CDC2L1 and CDC2L2. Phosphorylates MYL9/MLC2. Phosphorylates RAF1 at 'Ser-338' and 'Ser-339' resulting in: activation of RAF1, stimulation of RAF1 translocation to mitochondria, phosphorylation of BAD by RAF1, and RAF1 binding to BCL2. Phosphorylates SNAI1 at 'Ser-246' promoting its transcriptional repressor activity by increasing its accumulation in the nucleus. In podocytes, promotes NR3C2 nuclear localization. Required for atypical chemokine receptor ACKR2-induced phosphorylation of LIMK1 and cofilin (CFL1) and for the up-regulation of ACKR2 from endosomal compartment to cell membrane, increasing its efficiency in chemokine uptake and degradation. In synapses, seems to mediate the regulation of F-actin cluster formation performed by SHANK3, maybe through CFL1 phosphorylation and inactivation. Plays a role in RUFY3-mediated facilitating gastric cancer cells migration and invasion. In response to DNA damage, phosphorylates MORC2 which activates its ATPase activity and facilitates chromatin remodeling. In neurons, plays a crucial role in regulating GABA(A) receptor synaptic stability and hence GABAergic inhibitory synaptic transmission through its role in F-actin stabilization. In hippocampal neurons, necessary for the formation of dendritic spines and excitatory synapses; this function is dependent on kinase activity and may be exerted by the regulation of actomyosin contractility through the phosphorylation of myosin II regulatory light chain (MLC). Along with GIT1, positively regulates microtubule nucleation during interphase. Phosphorylates FXR1, promoting its localization to stress granules and activity. Phosphorylates ILK on 'Thr-173' and 'Ser-246', promoting nuclear export of ILK. The protein is Serine/threonine-protein kinase PAK 1 of Mus musculus (Mouse).